The chain runs to 595 residues: Probable translation initiation factor IF-2 (595 aa).

Positions 11-225 (LRTPIVAVLG…ILVGLAQRYL (215 aa)) constitute a tr-type G domain. Residues 20–27 (GHVDHGKT) form a G1 region. Position 20–27 (20–27 (GHVDHGKT)) interacts with GTP. The tract at residues 45–49 (GITQH) is G2. Positions 81 to 84 (DTPG) are G3. Residues 81-85 (DTPGH) and 135-138 (NKID) each bind GTP. Residues 135–138 (NKID) form a G4 region. Residues 203–205 (SAL) are G5.

This sequence belongs to the TRAFAC class translation factor GTPase superfamily. Classic translation factor GTPase family. IF-2 subfamily.

In terms of biological role, function in general translation initiation by promoting the binding of the formylmethionine-tRNA to ribosomes. Seems to function along with eIF-2. In Archaeoglobus fulgidus (strain ATCC 49558 / DSM 4304 / JCM 9628 / NBRC 100126 / VC-16), this protein is Probable translation initiation factor IF-2 (infB).